We begin with the raw amino-acid sequence, 21 residues long: Peptide Hact-2 (21 aa).

Cystine bridges form between C1-C18, C5-C14, and C9-C20.

Expressed in tentacles.

The protein localises to the nematocyst. The protein resides in the secreted. Peptide of unknown function. Does not exhibit antimicrobial activity against Escherichia coli and Staphylococcus aureus. Promotes cell proliferation of human fibroblast skin cells. Does not exhibit any effect on voltage-gated ion channels, including potassium, sodium, and calcium channels. The polypeptide is Peptide Hact-2 (Heliofungia actiniformis (Mushroom coral)).